A 659-amino-acid chain; its full sequence is Exocyst complex component 5 (659 aa).

The stretch at 1-58 forms a coiled coil; that stretch reads MRFEEEIGSLQMLCDQFQNKINTLEKQMNEEKKDYVQKLHRLHEKNGEAIDKMKQLDH.

The protein belongs to the SEC10 family. The exocyst complex is composed of sec-3/exoc1, sec-5/exoc2, sec-6/exoc3, sec-8/exoc4, sec-10/exoc5, sec-15/exoc6, exo-70/exoc7 and exo-84/exoc8.

Its function is as follows. Component of the exocyst complex involved in the docking of exocytic vesicles with fusion sites on the plasma membrane. The protein is Exocyst complex component 5 (sec-10) of Caenorhabditis elegans.